A 144-amino-acid chain; its full sequence is 3-hydroxyacyl-[acyl-carrier-protein] dehydratase FabZ (144 aa).

Residue His48 is part of the active site.

It belongs to the thioester dehydratase family. FabZ subfamily.

The protein resides in the cytoplasm. The enzyme catalyses a (3R)-hydroxyacyl-[ACP] = a (2E)-enoyl-[ACP] + H2O. Involved in unsaturated fatty acids biosynthesis. Catalyzes the dehydration of short chain beta-hydroxyacyl-ACPs and long chain saturated and unsaturated beta-hydroxyacyl-ACPs. This chain is 3-hydroxyacyl-[acyl-carrier-protein] dehydratase FabZ, found in Bacillus pumilus (strain SAFR-032).